Consider the following 188-residue polypeptide: Ion-translocating oxidoreductase complex subunit B (188 aa).

Residues 1–26 (MNGVFLAIGALLPICLAGGALLGYAA) form a hydrophobic region. One can recognise a 4Fe-4S domain in the interval 32–90 (QGDPVAEQVNALLPQTQCGQCGYPGCKPYAEAIAAGDKINKCPPGGEATIRALADLLDL). 12 residues coordinate [4Fe-4S] cluster: Cys-49, Cys-52, Cys-57, Cys-73, Cys-113, Cys-116, Cys-119, Cys-123, Cys-143, Cys-146, Cys-149, and Cys-153. 2 4Fe-4S ferredoxin-type domains span residues 104–133 (RVAYIREAECIGCTKCIQACPVDAIVGAAR) and 134–163 (LMHTVIADECTGCDLCLEPCPVDCIEMREI).

It belongs to the 4Fe4S bacterial-type ferredoxin family. RnfB subfamily. The complex is composed of six subunits: RnfA, RnfB, RnfC, RnfD, RnfE and RnfG. [4Fe-4S] cluster serves as cofactor.

The protein resides in the cell inner membrane. Functionally, part of a membrane-bound complex that couples electron transfer with translocation of ions across the membrane. The sequence is that of Ion-translocating oxidoreductase complex subunit B from Pseudomonas aeruginosa (strain LESB58).